Here is a 111-residue protein sequence, read N- to C-terminus: MPPLSESEFLALATRELDRIEAAVEAAADAADADIEISRTGNVMELEFENGSKIIINSQAPMQELWVAARAGGFHFRRDGERWIDTRNGGELYAALSGYVSEQAGASLSFH.

This sequence belongs to the frataxin family.

In terms of biological role, involved in iron-sulfur (Fe-S) cluster assembly. May act as a regulator of Fe-S biogenesis. In Cupriavidus taiwanensis (strain DSM 17343 / BCRC 17206 / CCUG 44338 / CIP 107171 / LMG 19424 / R1) (Ralstonia taiwanensis (strain LMG 19424)), this protein is Iron-sulfur cluster assembly protein CyaY.